A 438-amino-acid chain; its full sequence is MGETNSSLDNENTSFVGKLSSSSNVDPTLNLLFSQSKPIPKPVAKETTVLTKKDVEVEEANGVEEAAETIESDTKEVQNIKPKSKKKKKKLNDSSDDIEGKYFEELLAEEDEEKDKDSAGLINDEEDKSPAKQSVLEERTSQEDVKSEREVAEKLANELEKSDKTVFVNNLPARVVTNKGDYKDLTKHFRQFGAVDSIRFRSLAFSEAIPRKVAFFEKKFHSERDTVNAYIVFRDSSSARSALSLNGTMFMDRHLRVDSVSHPMPQDTKRCVFVGNLAFEAEEEPLWRYFGDCGSIDYVRIVRDPKTNLGKGFAYIQFKDTMGVDKALLLNEKKMPEGRTLRIMRAKSTKPKSITRSKRGDEKTRTLQGRARKLIGKAGNALLQQELALEGHRAKPGENPLAKKKVNKKRKERAAQWRNKKAESVGKKQKTAAGKKDK.

Disordered stretches follow at residues 1–28 and 60–94; these read MGET…VDPT and ANGV…LNDS. Over residues 60-71 the composition is skewed to acidic residues; the sequence is ANGVEEAAETIE. A phosphoserine mark is found at serine 94 and serine 95. Positions 108-146 are disordered; that stretch reads AEEDEEKDKDSAGLINDEEDKSPAKQSVLEERTSQEDVK. A compositionally biased stretch (basic and acidic residues) spans 135 to 146; sequence VLEERTSQEDVK. 2 RRM domains span residues 164 to 262 and 270 to 348; these read KTVF…SVSH and RCVF…RAKS. Composition is skewed to basic residues over residues 346–357 and 402–412; these read AKSTKPKSITRS and AKKKVNKKRKE. Disordered stretches follow at residues 346–366 and 390–438; these read AKST…KTRT and EGHR…KKDK.

It belongs to the RRM RBM34 family.

It localises to the nucleus. Its subcellular location is the nucleolus. Its function is as follows. Involved in pre-25S rRNA processing. In Schizosaccharomyces pombe (strain 972 / ATCC 24843) (Fission yeast), this protein is Nucleolar protein 12 (nop12).